Reading from the N-terminus, the 597-residue chain is Arginine--tRNA ligase (597 aa).

The 'HIGH' region signature appears at 125–135; sequence PNTNKPLHLGH.

The protein belongs to the class-I aminoacyl-tRNA synthetase family. As to quaternary structure, monomer.

The protein localises to the cytoplasm. It carries out the reaction tRNA(Arg) + L-arginine + ATP = L-arginyl-tRNA(Arg) + AMP + diphosphate. The polypeptide is Arginine--tRNA ligase (Parabacteroides distasonis (strain ATCC 8503 / DSM 20701 / CIP 104284 / JCM 5825 / NCTC 11152)).